Here is a 202-residue protein sequence, read N- to C-terminus: IMP cyclohydrolase (202 aa).

It belongs to the archaeal IMP cyclohydrolase family.

It catalyses the reaction IMP + H2O = 5-formamido-1-(5-phospho-D-ribosyl)imidazole-4-carboxamide. The protein operates within purine metabolism; IMP biosynthesis via de novo pathway; IMP from 5-formamido-1-(5-phospho-D-ribosyl)imidazole-4-carboxamide: step 1/1. Functionally, catalyzes the cyclization of 5-formylamidoimidazole-4-carboxamide ribonucleotide to IMP. This Methanosphaera stadtmanae (strain ATCC 43021 / DSM 3091 / JCM 11832 / MCB-3) protein is IMP cyclohydrolase.